Here is a 354-residue protein sequence, read N- to C-terminus: tRNA-specific 2-thiouridylase MnmA (354 aa).

Residues 6–13 (LLSGGVDS) and leucine 33 each bind ATP. Cysteine 100 acts as the Nucleophile in catalysis. Cysteine 100 and cysteine 195 are oxidised to a cystine. Glycine 123 is a binding site for ATP. Positions 145–147 (KDQ) are interaction with tRNA. Cysteine 195 acts as the Cysteine persulfide intermediate in catalysis.

The protein belongs to the MnmA/TRMU family.

It localises to the cytoplasm. The catalysed reaction is S-sulfanyl-L-cysteinyl-[protein] + uridine(34) in tRNA + AH2 + ATP = 2-thiouridine(34) in tRNA + L-cysteinyl-[protein] + A + AMP + diphosphate + H(+). Its function is as follows. Catalyzes the 2-thiolation of uridine at the wobble position (U34) of tRNA, leading to the formation of s(2)U34. This Borrelia duttonii (strain Ly) protein is tRNA-specific 2-thiouridylase MnmA.